Here is a 628-residue protein sequence, read N- to C-terminus: Phosphomethylpyrimidine synthase (628 aa).

Residues N225, M254, Y283, H319, 339–341 (SRG), 380–383 (DGLR), and E419 contribute to the substrate site. H423 lines the Zn(2+) pocket. Position 446 (Y446) interacts with substrate. Zn(2+) is bound at residue H487. Residues C567, C570, and C575 each contribute to the [4Fe-4S] cluster site.

It belongs to the ThiC family. Homodimer. The cofactor is [4Fe-4S] cluster.

The catalysed reaction is 5-amino-1-(5-phospho-beta-D-ribosyl)imidazole + S-adenosyl-L-methionine = 4-amino-2-methyl-5-(phosphooxymethyl)pyrimidine + CO + 5'-deoxyadenosine + formate + L-methionine + 3 H(+). Its pathway is cofactor biosynthesis; thiamine diphosphate biosynthesis. Functionally, catalyzes the synthesis of the hydroxymethylpyrimidine phosphate (HMP-P) moiety of thiamine from aminoimidazole ribotide (AIR) in a radical S-adenosyl-L-methionine (SAM)-dependent reaction. The chain is Phosphomethylpyrimidine synthase from Leptothrix cholodnii (strain ATCC 51168 / LMG 8142 / SP-6) (Leptothrix discophora (strain SP-6)).